The following is a 200-amino-acid chain: Large ribosomal subunit protein uL4 (200 aa).

Positions 44-71 (AQKTRAEVSGGGKKPWRQKGTGRARAGS) are disordered.

Belongs to the universal ribosomal protein uL4 family. As to quaternary structure, part of the 50S ribosomal subunit.

Functionally, one of the primary rRNA binding proteins, this protein initially binds near the 5'-end of the 23S rRNA. It is important during the early stages of 50S assembly. It makes multiple contacts with different domains of the 23S rRNA in the assembled 50S subunit and ribosome. In terms of biological role, forms part of the polypeptide exit tunnel. The polypeptide is Large ribosomal subunit protein uL4 (Psychrobacter sp. (strain PRwf-1)).